We begin with the raw amino-acid sequence, 283 residues long: Bifunctional protein FolD (283 aa).

NADP(+) is bound by residues 164–166 and serine 189; that span reads GRS.

This sequence belongs to the tetrahydrofolate dehydrogenase/cyclohydrolase family. In terms of assembly, homodimer.

It carries out the reaction (6R)-5,10-methylene-5,6,7,8-tetrahydrofolate + NADP(+) = (6R)-5,10-methenyltetrahydrofolate + NADPH. The catalysed reaction is (6R)-5,10-methenyltetrahydrofolate + H2O = (6R)-10-formyltetrahydrofolate + H(+). The protein operates within one-carbon metabolism; tetrahydrofolate interconversion. Functionally, catalyzes the oxidation of 5,10-methylenetetrahydrofolate to 5,10-methenyltetrahydrofolate and then the hydrolysis of 5,10-methenyltetrahydrofolate to 10-formyltetrahydrofolate. The protein is Bifunctional protein FolD of Lactobacillus acidophilus (strain ATCC 700396 / NCK56 / N2 / NCFM).